Here is a 456-residue protein sequence, read N- to C-terminus: Na(+)-translocating NADH-quinone reductase subunit A (456 aa).

This sequence belongs to the NqrA family. As to quaternary structure, composed of six subunits; NqrA, NqrB, NqrC, NqrD, NqrE and NqrF.

The enzyme catalyses a ubiquinone + n Na(+)(in) + NADH + H(+) = a ubiquinol + n Na(+)(out) + NAD(+). In terms of biological role, NQR complex catalyzes the reduction of ubiquinone-1 to ubiquinol by two successive reactions, coupled with the transport of Na(+) ions from the cytoplasm to the periplasm. NqrA to NqrE are probably involved in the second step, the conversion of ubisemiquinone to ubiquinol. This chain is Na(+)-translocating NADH-quinone reductase subunit A, found in Rhodopirellula baltica (strain DSM 10527 / NCIMB 13988 / SH1).